The chain runs to 209 residues: Probable peptide export ATP-binding protein YydI (209 aa).

An ABC transporter domain is found at 1–207 (MNIANYTLKV…SVDKLIEVYI (207 aa)). 33-40 (GKNGVGKS) is a binding site for ATP.

This sequence belongs to the ABC transporter superfamily. In terms of assembly, the complex is composed of two ATP-binding proteins (YydI), two transmembrane proteins (YydJ).

Functionally, suggested to be part of an ABC transporter complex YydIJ involved in export of the modified peptide YydF. Responsible for energy coupling to the transport system. The polypeptide is Probable peptide export ATP-binding protein YydI (yydI) (Bacillus subtilis (strain 168)).